We begin with the raw amino-acid sequence, 423 residues long: GTPase HflX (423 aa).

Residues 201-363 form the Hflx-type G domain; sequence IQLALVGYTN…KIEQALKGMM (163 aa). GTP-binding positions include 207 to 214, 232 to 236, 254 to 257, 320 to 323, and 341 to 343; these read GYTNAGKS, FATLD, DTVG, NKAD, and SAY. The Mg(2+) site is built by Ser214 and Thr234.

The protein belongs to the TRAFAC class OBG-HflX-like GTPase superfamily. HflX GTPase family. In terms of assembly, monomer. Associates with the 50S ribosomal subunit. The cofactor is Mg(2+).

The protein resides in the cytoplasm. GTPase that associates with the 50S ribosomal subunit and may have a role during protein synthesis or ribosome biogenesis. The polypeptide is GTPase HflX (Alkalihalophilus pseudofirmus (strain ATCC BAA-2126 / JCM 17055 / OF4) (Bacillus pseudofirmus)).